The chain runs to 170 residues: CCHC-type zinc finger nucleic acid binding protein (170 aa).

S2 bears the N-acetylserine mark. A CCHC-type 1 zinc finger spans residues 4–21; it reads NECFKCGRSGHWARECPT. K8 is subject to N6-acetyllysine. R25 and R27 each carry omega-N-methylarginine; by PRMT1. The segment at 25–33 is RNA-binding Arg/Gly-rich region (RGG-box); that stretch reads RGRGMRSRG. A Phosphoserine modification is found at S42. 6 CCHC-type zinc fingers span residues 45–62, 65–82, 89–106, 110–127, 128–145, and 149–166; these read DICYRCGESGHLAKDCDL, DACYNCGRGGHIAKDCKE, QCCYNCGKPGHLARDCDH, QKCYSCGEFGHIQKDCTK, VKCYRCGETGHVAINCSK, and VNCYRCGESGHLARECTI. R72 bears the Omega-N-methylarginine mark.

In terms of assembly, associates with the 40S ribosomal subunit, the 80S ribosome and with polysomes. Arginine methylation by PRMT1 in the Arg/Gly-rich region impedes RNA binding.

It localises to the nucleus. It is found in the cytoplasm. Its subcellular location is the endoplasmic reticulum. Functionally, single-stranded DNA-binding protein that preferentially binds to the sterol regulatory element (SRE) sequence 5'-GTGCGGTG-3', and thereby mediates transcriptional repression. Has a role as transactivator of the Myc promoter. Binds single-stranded RNA in a sequence-specific manner. Binds G-rich elements in target mRNA coding sequences. Prevents G-quadruplex structure formation in vitro, suggesting a role in supporting translation by resolving stable structures on mRNAs. The chain is CCHC-type zinc finger nucleic acid binding protein (CNBP) from Bos taurus (Bovine).